Reading from the N-terminus, the 338-residue chain is Methionine import ATP-binding protein MetN (338 aa).

In terms of domain architecture, ABC transporter spans 2–241; sequence ISLDGIRKVF…PKEHITKEFV (240 aa). ATP is bound at residue 38-45; the sequence is GYSGAGKS.

Belongs to the ABC transporter superfamily. Methionine importer (TC 3.A.1.24) family. In terms of assembly, the complex is composed of two ATP-binding proteins (MetN), two transmembrane proteins (MetI) and a solute-binding protein (MetQ).

It is found in the cell membrane. The enzyme catalyses L-methionine(out) + ATP + H2O = L-methionine(in) + ADP + phosphate + H(+). It carries out the reaction D-methionine(out) + ATP + H2O = D-methionine(in) + ADP + phosphate + H(+). Functionally, part of the ABC transporter complex MetNIQ involved in methionine import. Responsible for energy coupling to the transport system. This is Methionine import ATP-binding protein MetN from Halalkalibacterium halodurans (strain ATCC BAA-125 / DSM 18197 / FERM 7344 / JCM 9153 / C-125) (Bacillus halodurans).